We begin with the raw amino-acid sequence, 280 residues long: MTVTDIILIHGALNRGACYDAVVPLLEARGYRVHAPDLTGHTPGDGGHLSVVDMEHYTRPVADILARAEGQSILLGHSLGGASISWLAQHHPDKVAGLIYLTAVLTAPGITPETFVLPGEPNRGTPHALDLIQPVDEGRGLQADFSRLERLREVFMGDYPGEGMPPAEQFIQTQSTVPFGTPNPMEGRALEIPRLYIEALDDVVIPIAVQRQMQKEFPGPVAVVSLPASHAPYYSMPERLAEAIADFADAPAEYRQTATKAGPDRPAGADGGRADRADLP.

Catalysis depends on charge relay system residues Asp-202 and His-230. The disordered stretch occupies residues 254-280 (YRQTATKAGPDRPAGADGGRADRADLP).

The protein belongs to the AB hydrolase superfamily. In terms of assembly, monomer.

The catalysed reaction is (-)-trans-permethrin + H2O = (3-phenoxyphenyl)methanol + (1S,3R)-3-(2,2-dichlorovinyl)-2,2-dimethylcyclopropanecarboxylate + H(+). In terms of biological role, catalyzes the hydrolysis of pyrethroids pesticides. Catalyzes the hydrolysis of cypermethrin to equimolar amounts of cyano-3-phenoxybenzyl alcohol and 2,2-dimethyl-3-(2,2-dichlorovinyl)-cyclopropanecarboxylic acid. Hydrolyzes cis-permethrin at approximately equal rate to trans-permethrin. The sequence is that of Pyrethroid hydrolase (pytH) from Sphingobium wenxiniae (strain DSM 21828 / CGMCC 1.7748 / JZ-1).